The primary structure comprises 146 residues: Mite group 2 allergen Der p 2 (146 aa).

The first 17 residues, 1 to 17, serve as a signal peptide directing secretion; it reads MMYKILCLSLLVAAVAR. Intrachain disulfides connect Cys25–Cys136, Cys38–Cys44, and Cys90–Cys95.

The protein belongs to the NPC2 family.

Its subcellular location is the secreted. The polypeptide is Mite group 2 allergen Der p 2 (DERP2) (Dermatophagoides pteronyssinus (European house dust mite)).